We begin with the raw amino-acid sequence, 423 residues long: Endoplasmic reticulum junction formation protein lunapark (423 aa).

Residues 1–45 lie on the Cytoplasmic side of the membrane; it reads MGALLAKWRAKPSTVEVLEKMEKDIQSLEEFRDKNQKLRKIWVAR. Residues 16–40 are a coiled coil; the sequence is EVLEKMEKDIQSLEEFRDKNQKLRK. Residues 46–66 traverse the membrane as a helical segment; that stretch reads LFFYSTILYILTSLTVYLWYL. The Lumenal segment spans residues 67–77; the sequence is PDGMTARLLTM. Residues 78–98 form a helical membrane-spanning segment; sequence LLFLSFPVLIWFVRTLLILWF. At 99-423 the chain is on the cytoplasmic side; it reads SRRTERNNDA…ETEESFMETE (325 aa). Residues 101-128 adopt a coiled-coil conformation; it reads RTERNNDALELLKTEKKKILEEVMEKET. The interval 147-169 is disordered; that stretch reads KELELPVPGPPITPRPGQDLRQR. Thr-159 bears the Phosphothreonine mark. Residues Ser-177, Ser-179, and Ser-188 each carry the phosphoserine modification. The residue at position 198 (Thr-198) is a Phosphothreonine. Residues 200 to 247 are disordered; it reads SLQRDTSAPGGPPERSVQPTPQSNILQRRPGSPATTVSGMAIHPPGPP. A phosphoserine mark is found at Ser-206 and Ser-215. The segment covering 216–225 has biased composition (polar residues); it reads VQPTPQSNIL. Thr-219 bears the Phosphothreonine mark. Phosphoserine is present on residues Ser-222 and Ser-231. A C4-type; plays a role in ER morphology zinc finger spans residues 280-305; sequence CQQCFSHNGMALKEEFEYVAFRCAYC. The interval 318 to 423 is disordered; the sequence is APRLQEINFD…ETEESFMETE (106 aa). Positions 334 to 343 are enriched in polar residues; it reads DSQGSVSSVQ. 2 stretches are compositionally biased toward acidic residues: residues 370–391 and 414–423; these read QAIE…DDSE and ETEESFMETE.

The protein belongs to the lunapark family. In terms of assembly, homodimer; homodimerization requires the C4-type zinc finger motif and decreases during mitosis in a phosphorylation-dependent manner. In terms of processing, phosphorylated. Phosphorylation at Thr-159 occurs during interphase. Phosphorylation at Ser-177, Ser-179, Ser-188, Thr-198, Ser-206, Ser-215, Thr-219, Ser-222 and Ser-231 occurs during mitosis; these phosphorylations reduce both its homodimerization and the ER three-way tubular junction formation.

The protein resides in the endoplasmic reticulum membrane. Its function is as follows. Endoplasmic reticulum (ER)-shaping membrane protein that plays a role in determining ER morphology. Involved in the stabilization of nascent three-way ER tubular junctions within the ER network. May also play a role as a curvature-stabilizing protein within three-way ER tubular junction network. The sequence is that of Endoplasmic reticulum junction formation protein lunapark (lnpk) from Xenopus tropicalis (Western clawed frog).